We begin with the raw amino-acid sequence, 359 residues long: Membrane-bound lytic murein transglycosylase C (359 aa).

The signal sequence occupies residues 1–16; that stretch reads MKKYLALALIAPLLIS. The N-palmitoyl cysteine moiety is linked to residue C17. C17 is lipidated: S-diacylglycerol cysteine.

It belongs to the transglycosylase Slt family.

The protein resides in the cell outer membrane. The enzyme catalyses Exolytic cleavage of the (1-&gt;4)-beta-glycosidic linkage between N-acetylmuramic acid (MurNAc) and N-acetylglucosamine (GlcNAc) residues in peptidoglycan, from either the reducing or the non-reducing ends of the peptidoglycan chains, with concomitant formation of a 1,6-anhydrobond in the MurNAc residue.. In terms of biological role, murein-degrading enzyme. May play a role in recycling of muropeptides during cell elongation and/or cell division. The sequence is that of Membrane-bound lytic murein transglycosylase C from Escherichia coli O157:H7.